A 537-amino-acid chain; its full sequence is Chaperonin GroEL 1 (537 aa).

ATP is bound by residues 29–32 (TLGP), 86–90 (DGTTT), G413, and D494.

The protein belongs to the chaperonin (HSP60) family. Forms a cylinder of 14 subunits composed of two heptameric rings stacked back-to-back. Interacts with the co-chaperonin GroES.

The protein resides in the cytoplasm. The enzyme catalyses ATP + H2O + a folded polypeptide = ADP + phosphate + an unfolded polypeptide.. Functionally, together with its co-chaperonin GroES, plays an essential role in assisting protein folding. The GroEL-GroES system forms a nano-cage that allows encapsulation of the non-native substrate proteins and provides a physical environment optimized to promote and accelerate protein folding. The sequence is that of Chaperonin GroEL 1 from Mycobacterium leprae (strain TN).